The chain runs to 649 residues: Putative calpain-like cysteine protease A (649 aa).

A propeptide spanning residues 1–3 is cleaved from the precursor; the sequence is MLT. Disordered stretches follow at residues 1–22 and 124–193; these read MLTT…SSPS and PLSN…SMPA. A C2 domain is found at 15 to 123; it reads TTTTSSPSSD…LHANGEAKWY (109 aa). Over residues 140 to 149 the composition is skewed to low complexity; the sequence is ITNSNNKDNN. Residues 159-172 are compositionally biased toward basic and acidic residues; that stretch reads AQEKGDEDQHHSAD. Domain III stretches follow at residues 458–489 and 498–633; these read EGTY…NATF and EVEQ…ISLD.

The protein belongs to the peptidase C2 family. As to quaternary structure, monomer. Post-translationally, undergoes autolytic cleavage between Pro-192 and Ala-193.

It is found in the cytoplasm. Its subcellular location is the cytosol. Its function is as follows. Has a weak caseinolytic activity. This Dictyostelium discoideum (Social amoeba) protein is Putative calpain-like cysteine protease A (cplA).